Here is a 588-residue protein sequence, read N- to C-terminus: Protein cereblon (588 aa).

Disordered stretches follow at residues 1–107 and 159–197; these read MDDE…DDSD and QERR…DIGF. Polar residues predominate over residues 41–50; it reads AWNNATQDEQ. The span at 75–85 shows a compositional bias: acidic residues; sequence MVEDVLQDDTA. Over residues 86 to 96 the composition is skewed to polar residues; that stretch reads SEGSHPSSDMS. The span at 159 to 168 shows a compositional bias: basic and acidic residues; the sequence is QERRRSRTSE. Positions 181-192 are enriched in pro residues; sequence NDPPPQQPPRPP. The Lon N-terminal domain maps to 228-454; it reads HMLIFLHQHI…LIKSTFKDES (227 aa). The CULT domain maps to 453–562; it reads ESLFFCRYCN…LAGSSVRIGK (110 aa). Zn(2+)-binding residues include cysteine 458, cysteine 461, cysteine 527, and cysteine 530.

It belongs to the CRBN family. In terms of assembly, likely a component of a DCX (DDB1-CUL4-X-box) protein ligase complex. May interact with pic/DDB1. In terms of processing, ubiquitinated.

The protein resides in the nucleus. Its pathway is protein modification; protein ubiquitination. Substrate recognition component of a DCX (DDB1-CUL4-X-box) E3 protein ligase complex that mediates the ubiquitination and subsequent proteasomal degradation of target proteins. Has an essential role in mediating growth by negatively regulating insulin signaling. It also has a role in maintaining presynaptic function in the neuromuscular junction synapses of third-instar larvae. The sequence is that of Protein cereblon from Drosophila yakuba (Fruit fly).